The sequence spans 315 residues: Malate dehydrogenase (315 aa).

NAD(+) is bound at residue 9–15 (GGSGNVG). The substrate site is built by Arg84 and Arg90. NAD(+)-binding positions include Asn97 and 120-122 (VSN). Residues Asn122 and Arg153 each contribute to the substrate site. His177 serves as the catalytic Proton acceptor.

Belongs to the LDH/MDH superfamily.

The enzyme catalyses (S)-malate + NAD(+) = oxaloacetate + NADH + H(+). Its function is as follows. Catalyzes the reversible oxidation of malate to oxaloacetate. The polypeptide is Malate dehydrogenase (Helicobacter hepaticus (strain ATCC 51449 / 3B1)).